The sequence spans 497 residues: Probable malate:quinone oxidoreductase (497 aa).

The protein belongs to the MQO family. Requires FAD as cofactor.

It carries out the reaction (S)-malate + a quinone = a quinol + oxaloacetate. Its pathway is carbohydrate metabolism; tricarboxylic acid cycle; oxaloacetate from (S)-malate (quinone route): step 1/1. The protein is Probable malate:quinone oxidoreductase of Prochlorococcus marinus (strain MIT 9515).